The following is a 99-amino-acid chain: RNA-binding protein Hfq (99 aa).

Positions Asp9–Val68 constitute a Sm domain. The tract at residues Pro64–Glu99 is disordered. Residues His70–Gln93 show a composition bias toward low complexity.

Belongs to the Hfq family. Homohexamer.

Functionally, RNA chaperone that binds small regulatory RNA (sRNAs) and mRNAs to facilitate mRNA translational regulation in response to envelope stress, environmental stress and changes in metabolite concentrations. Also binds with high specificity to tRNAs. This is RNA-binding protein Hfq from Pectobacterium atrosepticum (strain SCRI 1043 / ATCC BAA-672) (Erwinia carotovora subsp. atroseptica).